The sequence spans 194 residues: Flagellin A2 (194 aa).

Residues 1-12 (MFEFITDEDERG) constitute a propeptide that is removed on maturation.

It belongs to the archaeal flagellin family. Post-translationally, glycosylated.

The protein resides in the archaeal flagellum. Its function is as follows. Flagellin is the subunit protein which polymerizes to form the filaments of archaeal flagella. This Halobacterium salinarum (strain ATCC 700922 / JCM 11081 / NRC-1) (Halobacterium halobium) protein is Flagellin A2 (flaA2).